The chain runs to 49 residues: Photosystem I reaction center subunit IX (49 aa).

Residues 14 to 34 traverse the membrane as a helical segment; sequence FISTAPVAATIWLTITAGILI.

Belongs to the PsaJ family.

The protein resides in the cellular thylakoid membrane. In terms of biological role, may help in the organization of the PsaE and PsaF subunits. This is Photosystem I reaction center subunit IX from Nostoc punctiforme (strain ATCC 29133 / PCC 73102).